Consider the following 930-residue polypeptide: Isoleucine--tRNA ligase (930 aa).

The 'HIGH' region motif lies at 57-67 (PYANGNIHVGH). Glutamate 554 is an L-isoleucyl-5'-AMP binding site. Positions 595–599 (KMSKS) match the 'KMSKS' region motif. An ATP-binding site is contributed by lysine 598. 4 residues coordinate Zn(2+): cysteine 888, cysteine 891, cysteine 908, and cysteine 911.

This sequence belongs to the class-I aminoacyl-tRNA synthetase family. IleS type 1 subfamily. In terms of assembly, monomer. Zn(2+) is required as a cofactor.

The protein resides in the cytoplasm. The catalysed reaction is tRNA(Ile) + L-isoleucine + ATP = L-isoleucyl-tRNA(Ile) + AMP + diphosphate. Its function is as follows. Catalyzes the attachment of isoleucine to tRNA(Ile). As IleRS can inadvertently accommodate and process structurally similar amino acids such as valine, to avoid such errors it has two additional distinct tRNA(Ile)-dependent editing activities. One activity is designated as 'pretransfer' editing and involves the hydrolysis of activated Val-AMP. The other activity is designated 'posttransfer' editing and involves deacylation of mischarged Val-tRNA(Ile). This chain is Isoleucine--tRNA ligase, found in Streptococcus sanguinis (strain SK36).